The chain runs to 299 residues: tRNA dimethylallyltransferase (299 aa).

Glycine 11–serine 18 serves as a coordination point for ATP. Residue threonine 13–serine 18 participates in substrate binding.

The protein belongs to the IPP transferase family. Monomer. Mg(2+) serves as cofactor.

The catalysed reaction is adenosine(37) in tRNA + dimethylallyl diphosphate = N(6)-dimethylallyladenosine(37) in tRNA + diphosphate. Functionally, catalyzes the transfer of a dimethylallyl group onto the adenine at position 37 in tRNAs that read codons beginning with uridine, leading to the formation of N6-(dimethylallyl)adenosine (i(6)A). The sequence is that of tRNA dimethylallyltransferase from Pseudarthrobacter chlorophenolicus (strain ATCC 700700 / DSM 12829 / CIP 107037 / JCM 12360 / KCTC 9906 / NCIMB 13794 / A6) (Arthrobacter chlorophenolicus).